The chain runs to 1045 residues: 3-hydroxy-3-methylglutaryl-coenzyme A reductase 2 (1045 aa).

Over 1–24 (MSLPLKTIVHLVKPFACTARFSAR) the chain is Cytoplasmic. The chain crosses the membrane as a helical span at residues 25–45 (YPIHVIVVAVLLSAAAYLSVT). At 46-186 (QSYLNEWKLD…FSNKTSEFDQ (141 aa)) the chain is on the lumenal side. Residues Asn-115, Asn-150, Asn-158, and Asn-179 are each glycosylated (N-linked (GlcNAc...) asparagine). Residues 187 to 207 (FDLFIILAAYLTLFYTLCCLF) traverse the membrane as a helical segment. The 169-residue stretch at 188–356 (DLFIILAAYL…ATFYSAILSM (169 aa)) folds into the SSD domain. Over 208-216 (NDMRKIGSK) the chain is Cytoplasmic. Residues 217–237 (FWLSFSALSNSACALYLSLYT) traverse the membrane as a helical segment. At 238-243 (THSLLK) the chain is on the lumenal side. The chain crosses the membrane as a helical span at residues 244 to 264 (KPASLLSLVIGLPFIVVIIGF). Topologically, residues 265 to 301 (KHKVRLAAFSLQKFHRISIDKKITVSNIIYEAMFQEG) are cytoplasmic. A helical membrane pass occupies residues 302–322 (AYLIRDYLFYISSFIGCAIYA). Over 323–324 (RH) the chain is Lumenal. Residues 325–345 (LPGLVNFCILSTFMLVFDLLL) traverse the membrane as a helical segment. The Cytoplasmic portion of the chain corresponds to 346-402 (SATFYSAILSMKLEINIIHRSTVIRQTLEEDGVVPTTADIIYKDETASEPHFLRSNV). The chain crosses the membrane as a helical span at residues 403 to 423 (AIILGKASVIGLLLLINLYVF). At 424–497 (TDKLNATILN…DSVSNAIRDQ (74 aa)) the chain is on the lumenal side. N-linked (GlcNAc...) asparagine glycosylation is found at Asn-428 and Asn-455. The chain crosses the membrane as a helical span at residues 498 to 518 (FISKLLFFAFAVSISINVYLL). Residues 519–1045 (NAAKIHTGYM…GPPCKTSALL (527 aa)) lie on the Cytoplasmic side of the membrane. Thr-565 is subject to Phosphothreonine. The active-site Charge relay system is Glu-710. Residue 716–722 (SAMRGCK) coordinates CoA. NADP(+) is bound by residues 777 to 779 (SRF) and 804 to 812 (DAMGMNMIS). Lys-844 (charge relay system) is an active-site residue. 873–875 (VLK) lines the CoA pocket. The active-site Charge relay system is the Asp-920. 1015–1016 (SH) serves as a coordination point for CoA. Residue His-1016 is the Proton donor of the active site. Residues 1018-1045 (THNRKTNKANELPQPSNKGPPCKTSALL) are disordered. 1020 to 1021 (NR) contributes to the NADP(+) binding site.

This sequence belongs to the HMG-CoA reductase family.

The protein localises to the endoplasmic reticulum membrane. The protein resides in the nucleus envelope. It catalyses the reaction (R)-mevalonate + 2 NADP(+) + CoA = (3S)-3-hydroxy-3-methylglutaryl-CoA + 2 NADPH + 2 H(+). It participates in metabolic intermediate biosynthesis; (R)-mevalonate biosynthesis; (R)-mevalonate from acetyl-CoA: step 3/3. Its function is as follows. HMG-CoA reductase; part of the first module of ergosterol biosynthesis pathway constitutes by the early steps of the pathway, conserved across all eukaryotes, and which results in the formation of mevalonate from acetyl-coenzyme A (acetyl-CoA). HMG1 and HMG2 catalyze the reduction of hydroxymethylglutaryl-CoA (HMG-CoA) to mevalonate that is the rate-limiting step within the first mosule. The first module starts with the action of the cytosolic acetyl-CoA acetyltransferase ERG10 that catalyzes the formation of acetoacetyl-CoA. The hydroxymethylglutaryl-CoA synthase ERG13 then condenses acetyl-CoA with acetoacetyl-CoA to form HMG-CoA. The rate-limiting step of the early module is the reduction to mevalonate by the 3-hydroxy-3-methylglutaryl-coenzyme A (HMG-CoA) reductases HMG1 and HMG2 which are derived from a single ancestral HMGR gene by gene duplication. The chain is 3-hydroxy-3-methylglutaryl-coenzyme A reductase 2 from Saccharomyces cerevisiae (strain ATCC 204508 / S288c) (Baker's yeast).